A 68-amino-acid polypeptide reads, in one-letter code: Serine palmitoyltransferase small subunit A (68 aa).

Over 1–9 the chain is Cytoplasmic; the sequence is MAFGDAWKQ. The chain crosses the membrane as a helical span at residues 10-26; sequence LSWFYYQYLLVTALYML. The Lumenal segment spans residues 27–31; that stretch reads EPWER. The helical transmembrane segment at 32 to 54 threads the bilayer; that stretch reads TIFNSLLISVAAMAVYTGYVFMP. Over 55–68 the chain is Cytoplasmic; the sequence is QHIMAILHYFEVVQ.

It belongs to the SPTSS family. SPTSSA subfamily. Component of the serine palmitoyltransferase (SPT) complex, which is composed of SPTLC1, SPTLC2 or SPTLC3 and SPTSSA or SPTSSB. The heterodimer consisting of SPTLC1 and SPTLC2/SPTLC3 forms the catalytic core of the enzyme, while SPTSSA or SPTSSB subunits determine substrate specificity. SPT also interacts with ORMDL proteins, especially ORMDL3, which negatively regulate SPT activity in the presence of ceramides.

It is found in the endoplasmic reticulum membrane. It functions in the pathway lipid metabolism; sphingolipid metabolism. Component of the serine palmitoyltransferase multisubunit enzyme (SPT) that catalyzes the initial and rate-limiting step in sphingolipid biosynthesis by condensing L-serine and activated acyl-CoA (most commonly palmitoyl-CoA) to form long-chain bases. The SPT complex is composed of SPTLC1, SPTLC2 or SPTLC3 and SPTSSA or SPTSSB. Within this complex, the heterodimer consisting of SPTLC1 and SPTLC2/SPTLC3 forms the catalytic core. Within the SPT complex, SPTSSA stimulates the catalytic activity and plays a role in substrate specificity, which depends upon the overall complex composition. The SPTLC1-SPTLC2-SPTSSA complex shows a strong preference for C16-CoA substrate, while the SPTLC1-SPTLC3-SPTSSA isozyme uses both C14-CoA and C16-CoA as substrates, with a slight preference for C14-CoA. Independently of its action as a SPT component, may be involved in MBOAT7 localization to mitochondria-associated membranes, a membrane bridge between the endoplasmic reticulum and mitochondria, may hence affect MBOAT7-catalyzed incorporation of arachidonic acid into phosphatidylinositol. The sequence is that of Serine palmitoyltransferase small subunit A (sptssa) from Danio rerio (Zebrafish).